Here is a 196-residue protein sequence, read N- to C-terminus: MMGYIPYVIENTDRGERSYDIYSRLLKDRIVLLSGEINDSVASSIVAQLLFLEAEDPEKDIGLYINSPGGVITSGLSIYDTMNFIRPDVSTICIGQAASMGAFLLSCGAKGKRFSLPHSRIMIHQPLGGAQGQASDIEIISNEILRLKGLMNSILAQNSGQSLEQIAKDTDRDFYMSAKEAKEYGLIDKVLQKNVK.

Ser-99 serves as the catalytic Nucleophile. His-124 is a catalytic residue.

The protein belongs to the peptidase S14 family. Fourteen ClpP subunits assemble into 2 heptameric rings which stack back to back to give a disk-like structure with a central cavity, resembling the structure of eukaryotic proteasomes.

The protein localises to the cytoplasm. It catalyses the reaction Hydrolysis of proteins to small peptides in the presence of ATP and magnesium. alpha-casein is the usual test substrate. In the absence of ATP, only oligopeptides shorter than five residues are hydrolyzed (such as succinyl-Leu-Tyr-|-NHMec, and Leu-Tyr-Leu-|-Tyr-Trp, in which cleavage of the -Tyr-|-Leu- and -Tyr-|-Trp bonds also occurs).. Functionally, cleaves peptides in various proteins in a process that requires ATP hydrolysis. Has a chymotrypsin-like activity. Plays a major role in the degradation of misfolded proteins. The chain is ATP-dependent Clp protease proteolytic subunit from Helicobacter pylori (strain ATCC 700392 / 26695) (Campylobacter pylori).